A 268-amino-acid chain; its full sequence is Myeloid leukemia factor 1 (268 aa).

Phosphoserine is present on residues Ser8, Ser32, and Ser34. Disordered regions lie at residues 44 to 66 (ISDG…SLTH) and 209 to 268 (GRHN…SNKK). An interaction with COPS3 region spans residues 50 to 125 (RAHNRRGHND…IGDEPPKVFQ (76 aa)). Composition is skewed to basic and acidic residues over residues 56 to 65 (GHNDGEDSLT) and 226 to 237 (PGSRELKRREKP).

This sequence belongs to the MLF family. In terms of assembly, interacts with CENPU. Also interacts with NRBP1/MADM, YWHAZ/14-3-3-zeta and HNRPUL2/MANP. NRBP1 recruits a serine kinase which phosphorylates both itself and MLF1. Phosphorylated MLF1 then binds to YWHAZ and is retained in the cytoplasm. Retained in the nucleus by binding to HNRPUL2. Binds to COPS3/CSN3 which is required for suppression of COP1 and activation of p53. Post-translationally, phosphorylation is required for binding to YWHAZ. As to expression, most abundant in testis, ovary, skeletal muscle, heart, kidney and colon. Low expression in spleen, thymus and peripheral blood leukocytes.

The protein resides in the cytoplasm. It localises to the nucleus. The protein localises to the cell projection. Its subcellular location is the cilium. It is found in the cytoskeleton. The protein resides in the cilium basal body. Functionally, involved in lineage commitment of primary hemopoietic progenitors by restricting erythroid formation and enhancing myeloid formation. Interferes with erythropoietin-induced erythroid terminal differentiation by preventing cells from exiting the cell cycle through suppression of CDKN1B/p27Kip1 levels. Suppresses COP1 activity via CSN3 which activates p53 and induces cell cycle arrest. Binds DNA and affects the expression of a number of genes so may function as a transcription factor in the nucleus. The sequence is that of Myeloid leukemia factor 1 (MLF1) from Homo sapiens (Human).